Consider the following 264-residue polypeptide: Energy-coupling factor transporter ATP-binding protein EcfA1 (264 aa).

The 233-residue stretch at isoleucine 2–isoleucine 234 folds into the ABC transporter domain. Glycine 34 to serine 41 contacts ATP.

It belongs to the ABC transporter superfamily. Energy-coupling factor EcfA family. Forms a stable energy-coupling factor (ECF) transporter complex composed of 2 membrane-embedded substrate-binding proteins (S component), 2 ATP-binding proteins (A component) and 2 transmembrane proteins (T component).

The protein resides in the cell inner membrane. Functionally, ATP-binding (A) component of a common energy-coupling factor (ECF) ABC-transporter complex. Unlike classic ABC transporters this ECF transporter provides the energy necessary to transport a number of different substrates. The polypeptide is Energy-coupling factor transporter ATP-binding protein EcfA1 (Fusobacterium nucleatum subsp. nucleatum (strain ATCC 25586 / DSM 15643 / BCRC 10681 / CIP 101130 / JCM 8532 / KCTC 2640 / LMG 13131 / VPI 4355)).